The chain runs to 546 residues: Chaperonin GroEL (546 aa).

Residues 30 to 33 (TLGP), Lys51, 87 to 91 (DGTTT), Gly415, and Asp497 contribute to the ATP site. A disordered region spans residues 527 to 546 (PKKDSPAPAMPGGGMGGMDF). The span at 537–546 (PGGGMGGMDF) shows a compositional bias: gly residues.

The protein belongs to the chaperonin (HSP60) family. As to quaternary structure, forms a cylinder of 14 subunits composed of two heptameric rings stacked back-to-back. Interacts with the co-chaperonin GroES.

The protein localises to the cytoplasm. It catalyses the reaction ATP + H2O + a folded polypeptide = ADP + phosphate + an unfolded polypeptide.. Functionally, together with its co-chaperonin GroES, plays an essential role in assisting protein folding. The GroEL-GroES system forms a nano-cage that allows encapsulation of the non-native substrate proteins and provides a physical environment optimized to promote and accelerate protein folding. The sequence is that of Chaperonin GroEL from Methylobacterium radiotolerans (strain ATCC 27329 / DSM 1819 / JCM 2831 / NBRC 15690 / NCIMB 10815 / 0-1).